We begin with the raw amino-acid sequence, 593 residues long: Phosphoinositide phosphatase SAC6 (593 aa).

The 329-residue stretch at 128-456 (LSVAERTTGL…GDDISIQYSG (329 aa)) folds into the SAC domain. The Phosphatase catalytic core signature appears at 391–402 (RTNCIDCLDRTN). The next 2 membrane-spanning stretches (helical) occupy residues 526-546 (AVANFPVALTVILISFWFATM) and 555-575 (YKHLLFSLVWAGISVAVAALV).

Predominantly expressed in flowers.

Its subcellular location is the endoplasmic reticulum membrane. In terms of biological role, phosphoinositide phosphatase that hydrolyzes PtdIns(3)P and PtdIns(4)P. Involved in priming for different defense responses. The protein is Phosphoinositide phosphatase SAC6 (SAC6) of Arabidopsis thaliana (Mouse-ear cress).